The sequence spans 455 residues: UDP-glycosyltransferase 2 (455 aa).

It belongs to the UDP-glycosyltransferase family.

The catalysed reaction is exophillate + UDP-alpha-D-galactose = phaeomoniecin D + UDP + H(+). The protein operates within secondary metabolite biosynthesis. In terms of biological role, catalyzes the second glycosylation step during phaeomoniecin D biosynthesis, the further O-galactosylation of exophillic acid (produced by the O-glycosyltransferase OGT1) to yield the 4-O-beta-D-galactoside phaeomoniecin D. The protein is UDP-glycosyltransferase 2 of Phaeomoniella chlamydospora (Phaeoacremonium chlamydosporum).